Consider the following 565-residue polypeptide: NAD-dependent malic enzyme (565 aa).

Tyrosine 104 serves as the catalytic Proton donor. Arginine 157 is an NAD(+) binding site. Lysine 175 acts as the Proton acceptor in catalysis. A divalent metal cation-binding residues include glutamate 246, aspartate 247, and aspartate 270. Positions 270 and 418 each coordinate NAD(+).

The protein belongs to the malic enzymes family. In terms of assembly, homotetramer. Mg(2+) is required as a cofactor. It depends on Mn(2+) as a cofactor.

It carries out the reaction (S)-malate + NAD(+) = pyruvate + CO2 + NADH. The catalysed reaction is oxaloacetate + H(+) = pyruvate + CO2. This chain is NAD-dependent malic enzyme, found in Erwinia tasmaniensis (strain DSM 17950 / CFBP 7177 / CIP 109463 / NCPPB 4357 / Et1/99).